Here is a 987-residue protein sequence, read N- to C-terminus: Vacuolar membrane protease (987 aa).

Topologically, residues 1–14 (MATRKARNPLAFMP) are cytoplasmic. Residues 15–35 (WPVTILTTAMYLALIIPLLVI) traverse the membrane as a helical segment. Over 36-384 (HHNVPPAPRT…AFAVFRLHTL (349 aa)) the chain is Vacuolar. N-linked (GlcNAc...) asparagine glycans are attached at residues Asn51 and Asn117. Zn(2+)-binding residues include His167 and Asp179. Catalysis depends on Glu213, which acts as the Proton acceptor. Positions 214, 239, and 312 each coordinate Zn(2+). The helical transmembrane segment at 385–405 (FALSVTLLIVAPLTLLVTSVI) threads the bilayer. Residues 406-435 (LSRADKMYLFRSSVYSEINDDYIPLRGLRG) lie on the Cytoplasmic side of the membrane. Residues 436 to 456 (FFRFPFLISIPTGVTVGLAYM) form a helical membrane-spanning segment. Residues 457-466 (VTKVNPFIAH) lie on the Vacuolar side of the membrane. Residues 467 to 487 (SSSYAVWSMMISAWIFLAWFV) traverse the membrane as a helical segment. Topologically, residues 488–501 (SRVANSARPSAFHR) are cytoplasmic. The helical transmembrane segment at 502 to 522 (VYTWTWMFVLTWSLMVVCTVY) threads the bilayer. At 523 to 526 (EHEE) the chain is on the vacuolar side. The helical transmembrane segment at 527–547 (GLAGGYFIFFYFAGTFLATWI) threads the bilayer. The Cytoplasmic segment spans residues 548 to 649 (SYLELFALPT…WSGVLPRWTW (102 aa)). The disordered stretch occupies residues 572–600 (STQGSRLAASGDEHQDDAAEEDPTESTSL). The helical transmembrane segment at 650-670 (LLQLLITAPVILMLIVPLALL) threads the bilayer. Residues 671-686 (TTSALSQTGQDGSPQL) are Vacuolar-facing. The chain crosses the membrane as a helical span at residues 687–707 (LIYLFISCLTALLFAPMLPFI). Over 708–715 (HRYTYHLP) the chain is Cytoplasmic. A helical membrane pass occupies residues 716–736 (IFLLFVFIGTMIYNLVAFPFA). Residues 737-987 (DSNRLKLFFL…KRSSLGALGS (251 aa)) are Vacuolar-facing. Asn781 and Asn871 each carry an N-linked (GlcNAc...) asparagine glycan.

This sequence belongs to the peptidase M28 family. Requires Zn(2+) as cofactor.

The protein localises to the vacuole membrane. Its function is as follows. May be involved in vacuolar sorting and osmoregulation. In Penicillium rubens (strain ATCC 28089 / DSM 1075 / NRRL 1951 / Wisconsin 54-1255) (Penicillium chrysogenum), this protein is Vacuolar membrane protease.